The sequence spans 233 residues: C-type lectin domain-containing protein 87 (233 aa).

The signal sequence occupies residues M1–A19. The O-linked (Xyl...) (chondroitin sulfate) serine glycan is linked to S31. A glycan (N-linked (GlcNAc...) asparagine) is linked at N81. The C-type lectin domain maps to F93–E223. 2 disulfides stabilise this stretch: C114–C222 and C193–C214. An N-linked (GlcNAc...) asparagine glycan is attached at N225.

This chain is C-type lectin domain-containing protein 87, found in Caenorhabditis elegans.